The sequence spans 1214 residues: Lysine-specific demethylase 3A (1214 aa).

Residues Ser150 and Ser209 each carry the phosphoserine modification. Residues 194–211 are compositionally biased toward polar residues; sequence TPSSNRQQNTPQAANSPP. 3 disordered regions span residues 194-215, 271-293, and 310-398; these read TPSS…NIGA, PKGS…STPQ, and KAEL…KSVL. Position 330 is a phosphoserine (Ser330). A compositionally biased stretch (polar residues) spans 361–370; it reads LGSQSQNLKE. The span at 371–380 shows a compositional bias: basic and acidic residues; that stretch reads TSVKVDHDSC. Residues 381–391 are compositionally biased toward polar residues; sequence CTRSSNKTQTP. Residues 546 to 571 form a C6-type zinc finger; sequence CDVCDTTIFNLHWVCPRCGFGVCVDC. Positions 769-773 match the LXXLL motif motif; sequence LRNLL. Position 779 is an N6-acetyllysine (Lys779). The JmjC domain occupies 944–1167; sequence MPSRFDDLMA…HCFWLTQEFR (224 aa). Positions 1006, 1008, and 1135 each coordinate Fe cation.

Belongs to the JHDM2 histone demethylase family. In terms of assembly, interacts with VRK1. Requires Fe(2+) as cofactor. Testis specific. Expressed only in male germ cells.

Its subcellular location is the cytoplasm. The protein resides in the nucleus. The enzyme catalyses N(6),N(6)-dimethyl-L-lysyl(9)-[histone H3] + 2 2-oxoglutarate + 2 O2 = L-lysyl(9)-[histone H3] + 2 formaldehyde + 2 succinate + 2 CO2. Its function is as follows. Histone demethylase that specifically demethylates 'Lys-9' of histone H3, thereby playing a central role in histone code. Preferentially demethylates mono- and dimethylated H3 'Lys-9' residue, with a preference for dimethylated residue, while it has weak or no activity on trimethylated H3 'Lys-9'. Demethylation of Lys residue generates formaldehyde and succinate. Involved in hormone-dependent transcriptional activation, by participating in recruitment to androgen-receptor target genes, resulting in H3 'Lys-9' demethylation and transcriptional activation. Involved in spermatogenesis by regulating expression of target genes such as PRM1 and TNP1 which are required for packaging and condensation of sperm chromatin. Directly regulates expression of PPARA and UCP1 and is involved in obesity resistance. The sequence is that of Lysine-specific demethylase 3A (Kdm3a) from Rattus norvegicus (Rat).